Consider the following 281-residue polypeptide: CDAN1-interacting nuclease 1 (281 aa).

Position 114 is a phosphothreonine (threonine 114).

Its subcellular location is the nucleus. It localises to the cytoplasm. Functionally, plays a role in erythroid cell differentiation. This is CDAN1-interacting nuclease 1 from Homo sapiens (Human).